We begin with the raw amino-acid sequence, 30 residues long: Snaclec carinactivase-1 regulatory subunit 17 kDa chain (30 aa).

Positions 1–30 constitute a C-type lectin domain; that stretch reads DCLPGWSSHEGHCYKVFNQEMYWADAEKFC. A disulfide bridge connects residues C2 and C13.

Belongs to the snaclec family. As to quaternary structure, heterodimer of a metalloproteinase subunit and a regulatory subunit comprising two polypeptides disulfide-linked (14 kDa and 17 kDa chains). As to expression, expressed by the venom gland.

It is found in the secreted. Calcium-dependent prothrombin activator. This protein may activate prothrombin via recognition by the regulatory subunit of the calcium ion bound conformation of its gamma-carboxyglutamic acid (GLA) domain, and the subsequent conversion of prothrombin to active thrombin is catalyzed by the catalytic subunit. The polypeptide is Snaclec carinactivase-1 regulatory subunit 17 kDa chain (Echis carinatus (Saw-scaled viper)).